Here is a 461-residue protein sequence, read N- to C-terminus: Deoxyguanosinetriphosphate triphosphohydrolase-like protein (461 aa).

The disordered stretch occupies residues 22–41 (ERFLPDPPREKDNRPPFRRD). The segment covering 24–41 (FLPDPPREKDNRPPFRRD) has biased composition (basic and acidic residues). Positions 72–285 (RLTHSLEVAQ…MELADDIAYG (214 aa)) constitute an HD domain.

It belongs to the dGTPase family. Type 2 subfamily.

This chain is Deoxyguanosinetriphosphate triphosphohydrolase-like protein, found in Haemophilus influenzae (strain PittEE).